The following is a 169-amino-acid chain: SsrA-binding protein (169 aa).

It belongs to the SmpB family.

It is found in the cytoplasm. Functionally, required for rescue of stalled ribosomes mediated by trans-translation. Binds to transfer-messenger RNA (tmRNA), required for stable association of tmRNA with ribosomes. tmRNA and SmpB together mimic tRNA shape, replacing the anticodon stem-loop with SmpB. tmRNA is encoded by the ssrA gene; the 2 termini fold to resemble tRNA(Ala) and it encodes a 'tag peptide', a short internal open reading frame. During trans-translation Ala-aminoacylated tmRNA acts like a tRNA, entering the A-site of stalled ribosomes, displacing the stalled mRNA. The ribosome then switches to translate the ORF on the tmRNA; the nascent peptide is terminated with the 'tag peptide' encoded by the tmRNA and targeted for degradation. The ribosome is freed to recommence translation, which seems to be the essential function of trans-translation. The sequence is that of SsrA-binding protein from Mycolicibacterium paratuberculosis (strain ATCC BAA-968 / K-10) (Mycobacterium paratuberculosis).